A 94-amino-acid chain; its full sequence is Protein S100-A1 (94 aa).

EF-hand domains lie at 13–48 (INVFHAHSGKEGDKYKLSKKELKELLQTELSGFLDA) and 50–85 (KDVDAVDKVMKELDENGDGEVDFQEYVVLVAALTVA). 7 residues coordinate Ca(2+): K28, E33, D63, N65, D67, E69, and E74. S-nitrosocysteine is present on C86.

This sequence belongs to the S-100 family. In terms of assembly, dimer of either two alpha chains, or two beta chains, or one alpha and one beta chain. Also forms heterodimers with S100P. Interacts with AGER. Interacts with CAPZA1. Interacts with FKBP4. Interacts with RYR1 and RYR2. Interacts with CACYBP in a calcium-dependent manner. Interacts with PPP5C (via TPR repeats); the interaction is calcium-dependent and modulates PPP5C activity. Interacts with ATP2A2 and PLN in a Ca(2+)-dependent manner. Interacts with mitochondrial F1-ATPase subunits ATP5F1A and ATP5F1B; these interactions increase F1-ATPase activity. Glutathionylated; glutathionylation increases affinity to calcium about 10-fold. Highly prevalent in heart. Also found in lesser quantities in skeletal muscle and brain.

The protein resides in the cytoplasm. The protein localises to the sarcoplasmic reticulum. Its subcellular location is the mitochondrion. In terms of biological role, small calcium binding protein that plays important roles in several biological processes such as Ca(2+) homeostasis, chondrocyte biology and cardiomyocyte regulation. In response to an increase in intracellular Ca(2+) levels, binds calcium which triggers conformational changes. These changes allow interactions with specific target proteins and modulate their activity. Regulates a network in cardiomyocytes controlling sarcoplasmic reticulum Ca(2+) cycling and mitochondrial function through interaction with the ryanodine receptors RYR1 and RYR2, sarcoplasmic reticulum Ca(2+)-ATPase/ATP2A2 and mitochondrial F1-ATPase. Facilitates diastolic Ca(2+) dissociation and myofilament mechanics in order to improve relaxation during diastole. The polypeptide is Protein S100-A1 (S100A1) (Homo sapiens (Human)).